The primary structure comprises 262 residues: Ribosome-recycling factor, mitochondrial (262 aa).

Residues 1 to 55 constitute a mitochondrion transit peptide; the sequence is MALGLKCFRMVHPTFRNYLAASIRPVSEVTLKTVHERQHGHRQYMAYSAVPVRHF.

Belongs to the RRF family.

The protein resides in the mitochondrion. Its function is as follows. Responsible for the disassembly of ribosomes from messenger RNA at the termination of mitochondrial protein biosynthesis. Acts in collaboration with GFM2. Promotes mitochondrial ribosome recycling by dissolution of intersubunit contacts. The polypeptide is Ribosome-recycling factor, mitochondrial (Homo sapiens (Human)).